A 301-amino-acid chain; its full sequence is Phosphatidylglycerol--prolipoprotein diacylglyceryl transferase (301 aa).

3 consecutive transmembrane segments (helical) span residues 17 to 37 (LAVR…IVVG), 59 to 79 (MLFY…VLFY), and 97 to 117 (GGMS…LFAY). Arginine 142 contacts a 1,2-diacyl-sn-glycero-3-phospho-(1'-sn-glycerol). 2 consecutive transmembrane segments (helical) span residues 230-250 (MGAI…TVEF) and 265-285 (LSMG…LLVW).

This sequence belongs to the Lgt family.

The protein localises to the cell inner membrane. It catalyses the reaction L-cysteinyl-[prolipoprotein] + a 1,2-diacyl-sn-glycero-3-phospho-(1'-sn-glycerol) = an S-1,2-diacyl-sn-glyceryl-L-cysteinyl-[prolipoprotein] + sn-glycerol 1-phosphate + H(+). The protein operates within protein modification; lipoprotein biosynthesis (diacylglyceryl transfer). In terms of biological role, catalyzes the transfer of the diacylglyceryl group from phosphatidylglycerol to the sulfhydryl group of the N-terminal cysteine of a prolipoprotein, the first step in the formation of mature lipoproteins. The sequence is that of Phosphatidylglycerol--prolipoprotein diacylglyceryl transferase from Paraburkholderia phytofirmans (strain DSM 17436 / LMG 22146 / PsJN) (Burkholderia phytofirmans).